A 420-amino-acid polypeptide reads, in one-letter code: Deoxyribodipyrimidine photo-lyase (420 aa).

The Photolyase/cryptochrome alpha/beta domain maps to 2–124; it reads GPLLVWHRGD…PLHLLPAPHL (123 aa). The disordered stretch occupies residues 147 to 176; the sequence is APPLPPPEALPKGPEEGEIPREDPGLPLPE. Over residues 159 to 170 the composition is skewed to basic and acidic residues; sequence GPEEGEIPREDP. Tyrosine 197 contacts FAD. A DNA-binding site is contributed by arginine 201. FAD-binding positions include 209-213, tryptophan 241, arginine 248, asparagine 310, and 341-343; these read GSRLS and DGD. 2 interaction with DNA regions span residues 244–251 and 310–311; these read ELLWRDFS and NR. A DNA-binding site is contributed by glutamine 373.

The protein belongs to the DNA photolyase class-1 family. Monomer. The cofactor is FAD.

The enzyme catalyses cyclobutadipyrimidine (in DNA) = 2 pyrimidine residues (in DNA).. In terms of biological role, involved in repair of UV radiation-induced DNA damage. Catalyzes the light-dependent monomerization (300-600 nm) of cyclobutyl pyrimidine dimers (in cis-syn configuration), which are formed between adjacent bases on the same DNA strand upon exposure to ultraviolet radiation. This is Deoxyribodipyrimidine photo-lyase (phr) from Thermus thermophilus (strain ATCC 27634 / DSM 579 / HB8).